Here is a 157-residue protein sequence, read N- to C-terminus: Large ribosomal subunit protein uL15 (157 aa).

The segment at 1 to 64 is disordered; sequence MKLNEIPAVP…MPLQRRLPKR (64 aa). A compositionally biased stretch (gly residues) spans 21-31; that stretch reads RGPGSGNGKTA.

Belongs to the universal ribosomal protein uL15 family. As to quaternary structure, part of the 50S ribosomal subunit.

In terms of biological role, binds to the 23S rRNA. This chain is Large ribosomal subunit protein uL15, found in Magnetococcus marinus (strain ATCC BAA-1437 / JCM 17883 / MC-1).